The primary structure comprises 122 residues: Large ribosomal subunit protein uL14 (122 aa).

This sequence belongs to the universal ribosomal protein uL14 family. In terms of assembly, part of the 50S ribosomal subunit. Forms a cluster with proteins L3 and L19. In the 70S ribosome, L14 and L19 interact and together make contacts with the 16S rRNA in bridges B5 and B8.

Binds to 23S rRNA. Forms part of two intersubunit bridges in the 70S ribosome. The sequence is that of Large ribosomal subunit protein uL14 from Chloroflexus aurantiacus (strain ATCC 29366 / DSM 635 / J-10-fl).